Here is a 579-residue protein sequence, read N- to C-terminus: Glucans biosynthesis protein G (579 aa).

Positions 1-37 (MIVSPHKASRIPGNRLRKALMASAALVGLMSAGQLWA) are cleaved as a signal peptide. The segment at 516–579 (AKPAEEAKHD…TWSYQLPADE (64 aa)) is disordered. The segment covering 517–539 (KPAEEAKHDKTAAKHGKAEKAAK) has biased composition (basic and acidic residues).

The protein belongs to the OpgD/OpgG family.

The protein resides in the periplasm. Its pathway is glycan metabolism; osmoregulated periplasmic glucan (OPG) biosynthesis. In terms of biological role, involved in the biosynthesis of osmoregulated periplasmic glucans (OPGs). The protein is Glucans biosynthesis protein G of Pseudomonas putida (strain W619).